Reading from the N-terminus, the 277-residue chain is Coiled-coil domain-containing protein 117 (277 aa).

Residues 1-69 (MAALGRPFSG…GRVSIHCRKK (69 aa)) are disordered. The span at 26–37 (FAGRAFPPGAAG) shows a compositional bias: low complexity. Position 47 is an omega-N-methylarginine (arginine 47). Serine 52 carries the phosphoserine modification. Residues 58-69 (ARGRVSIHCRKK) are compositionally biased toward basic residues. Residues 139–166 (QCEVARRRLQEIEDRIIDEDEEVESDRN) adopt a coiled-coil conformation. The segment at 212-277 (LPELLPEKPK…ATSTEEEMEL (66 aa)) is disordered.

In terms of assembly, interacts with CIAO2B; the interaction is direct. Interacts with MMS19; the interaction is indirect.

It localises to the cytoplasm. The protein resides in the cytoskeleton. The protein localises to the spindle. It is found in the nucleus. Its function is as follows. Facilitates DNA repair, cell cycle progression, and cell proliferation through its interaction with CIAO2B. This chain is Coiled-coil domain-containing protein 117, found in Mus musculus (Mouse).